Here is a 322-residue protein sequence, read N- to C-terminus: Cytochrome c biogenesis protein CcsA (322 aa).

8 consecutive transmembrane segments (helical) span residues 17-37 (VVSIVITIHLITLLVDEIVGL), 44-64 (GMIATFFCITGLLVTRWIYLG), 71-91 (LYESLIFLSWSFSIIHIVPYF), 98-118 (LSALTAPSAIFTQGFATSGLL), 143-163 (MVLGYAALLCGSLLSVALLVI), 225-245 (VISLGFLFLTIGILSGAVWAN), 258-273 (ETWAFITWTIFAIYLH), and 286-306 (AIVASMGFLIIWICYFGVNLL).

The protein belongs to the CcmF/CycK/Ccl1/NrfE/CcsA family. May interact with Ccs1.

It is found in the plastid. The protein localises to the chloroplast thylakoid membrane. In terms of biological role, required during biogenesis of c-type cytochromes (cytochrome c6 and cytochrome f) at the step of heme attachment. The protein is Cytochrome c biogenesis protein CcsA of Vitis vinifera (Grape).